The chain runs to 122 residues: Large ribosomal subunit protein uL14 (122 aa).

The protein belongs to the universal ribosomal protein uL14 family. As to quaternary structure, part of the 50S ribosomal subunit. Forms a cluster with proteins L3 and L19. In the 70S ribosome, L14 and L19 interact and together make contacts with the 16S rRNA in bridges B5 and B8.

In terms of biological role, binds to 23S rRNA. Forms part of two intersubunit bridges in the 70S ribosome. In Helicobacter pylori (strain J99 / ATCC 700824) (Campylobacter pylori J99), this protein is Large ribosomal subunit protein uL14.